Consider the following 590-residue polypeptide: Protein Spindly (590 aa).

A coiled-coil region spans residues 1 to 401 (MSDLEDEIKV…SMARMKALSE (401 aa)). The disordered stretch occupies residues 446 to 590 (NKAQVQKRRR…KTMANECAQQ (145 aa)). 2 stretches are compositionally biased toward basic and acidic residues: residues 483–497 (SNEKAEEKTPSHPVE) and 518–527 (RESKSVRICE). 2 stretches are compositionally biased toward polar residues: residues 541-554 (VNDSNSKNVDQTHQ) and 572-590 (QQPTHVSSQKTMANECAQQ).

The protein belongs to the Spindly family.

It is found in the chromosome. It localises to the centromere. The protein resides in the kinetochore. Its function is as follows. Required for the localization of dynein and dynactin to the mitotic kintochore. Dynein is believed to control the initial lateral interaction between the kinetochore and spindle microtubules and to facilitate the subsequent formation of end-on kinetochore-microtubule attachments mediated by the NDC80 complex. May act as an adapter protein linking the dynein motor complex to various cargos. This chain is Protein Spindly (spdl1), found in Danio rerio (Zebrafish).